The chain runs to 96 residues: Small ribosomal subunit protein uS17 (96 aa).

The protein belongs to the universal ribosomal protein uS17 family. Part of the 30S ribosomal subunit.

One of the primary rRNA binding proteins, it binds specifically to the 5'-end of 16S ribosomal RNA. The polypeptide is Small ribosomal subunit protein uS17 (Deinococcus radiodurans (strain ATCC 13939 / DSM 20539 / JCM 16871 / CCUG 27074 / LMG 4051 / NBRC 15346 / NCIMB 9279 / VKM B-1422 / R1)).